We begin with the raw amino-acid sequence, 389 residues long: Naringenin-chalcone synthase (389 aa).

Cysteine 164 is an active-site residue.

It belongs to the thiolase-like superfamily. Chalcone/stilbene synthases family. As to expression, expressed in glandular trichomes. Detected at low levels in female flowers, stems, seeds, leaves and roots.

The protein localises to the cytoplasm. It catalyses the reaction (E)-4-coumaroyl-CoA + 3 malonyl-CoA + 3 H(+) = 2',4,4',6'-tetrahydroxychalcone + 3 CO2 + 4 CoA. Its function is as follows. Chalcone synthase that can also use isovaleryl-CoA, isobutyryl-CoA or hexanoyl-CoA as substrates, but that is unable to produce olivetol or olivetolic acid. In Cannabis sativa (Hemp), this protein is Naringenin-chalcone synthase (CHS).